Consider the following 578-residue polypeptide: V-type ATP synthase alpha chain (578 aa).

Gly228 to Thr235 contributes to the ATP binding site.

Belongs to the ATPase alpha/beta chains family.

It catalyses the reaction ATP + H2O + 4 H(+)(in) = ADP + phosphate + 5 H(+)(out). Its function is as follows. Produces ATP from ADP in the presence of a proton gradient across the membrane. The V-type alpha chain is a catalytic subunit. The polypeptide is V-type ATP synthase alpha chain (Thermus thermophilus (strain ATCC BAA-163 / DSM 7039 / HB27)).